The sequence spans 182 residues: Ribosome maturation factor RimM (182 aa).

One can recognise a PRC barrel domain in the interval 103–182; it reads VGDYYWKDLI…TIEVDWDPGF (80 aa).

This sequence belongs to the RimM family. As to quaternary structure, binds ribosomal protein uS19.

Its subcellular location is the cytoplasm. An accessory protein needed during the final step in the assembly of 30S ribosomal subunit, possibly for assembly of the head region. Essential for efficient processing of 16S rRNA. May be needed both before and after RbfA during the maturation of 16S rRNA. It has affinity for free ribosomal 30S subunits but not for 70S ribosomes. The polypeptide is Ribosome maturation factor RimM (Pectobacterium atrosepticum (strain SCRI 1043 / ATCC BAA-672) (Erwinia carotovora subsp. atroseptica)).